Consider the following 172-residue polypeptide: Sec-independent protein translocase protein TatB (172 aa).

The helical transmembrane segment at 1–21 (MIDLGISKLALIGAVALVVIG) threads the bilayer. The disordered stretch occupies residues 97 to 129 (GDPASRQTATQAAEWRPAPAKSRNGRNSWRNKQ).

Belongs to the TatB family. In terms of assembly, the Tat system comprises two distinct complexes: a TatABC complex, containing multiple copies of TatA, TatB and TatC subunits, and a separate TatA complex, containing only TatA subunits. Substrates initially bind to the TatABC complex, which probably triggers association of the separate TatA complex to form the active translocon.

The protein localises to the cell inner membrane. Functionally, part of the twin-arginine translocation (Tat) system that transports large folded proteins containing a characteristic twin-arginine motif in their signal peptide across membranes. Together with TatC, TatB is part of a receptor directly interacting with Tat signal peptides. TatB may form an oligomeric binding site that transiently accommodates folded Tat precursor proteins before their translocation. The polypeptide is Sec-independent protein translocase protein TatB (Ralstonia nicotianae (strain ATCC BAA-1114 / GMI1000) (Ralstonia solanacearum)).